We begin with the raw amino-acid sequence, 101 residues long: uncharacterized protein (101 aa).

Residues 1-17 form the signal peptide; sequence MKKAAVLAVVLSLGLAG. A lipid anchor (N-palmitoyl cysteine) is attached at C18. The S-diacylglycerol cysteine moiety is linked to residue C18.

The protein resides in the cell membrane. This is an uncharacterized protein from Pasteurella multocida (strain Pm70).